Here is a 351-residue protein sequence, read N- to C-terminus: Beta-1,4-xylosyltransferase IRX9 (351 aa).

Over 1–16 (MGSLERSKKKAQVWKK) the chain is Cytoplasmic. Residues 17–36 (AVIHFSLCFVMGFFTGFAPA) traverse the membrane as a helical; Signal-anchor for type II membrane protein segment. Over 37-351 (GKASFFSNFE…KFPTRTRLST (315 aa)) the chain is Lumenal. N-linked (GlcNAc...) asparagine glycans are attached at residues Asn-64 and Asn-74. Residues 80–107 (SQSQAPAPAESREAEGETRSLSEKEDEN) form a disordered region. Residues 89–107 (ESREAEGETRSLSEKEDEN) are compositionally biased toward basic and acidic residues. 2 N-linked (GlcNAc...) asparagine glycosylation sites follow: Asn-271 and Asn-287.

It belongs to the glycosyltransferase 43 family. In terms of tissue distribution, expressed in developing interfascicular fibers, primary and secondary xylem in stems and developing secondary xylem in roots.

The protein localises to the golgi apparatus membrane. The enzyme catalyses [(1-&gt;4)-beta-D-xylan](n) + UDP-alpha-D-xylose = [(1-&gt;4)-beta-D-xylan](n+1) + UDP + H(+). Its function is as follows. Involved in the synthesis of the hemicellulose glucuronoxylan, a major component of secondary cell walls. Xylan xylosyltransferase that acts cooperatively with IRX14 to achieve the successive addition of xylosyl residues during xylan backbone elongation. The sequence is that of Beta-1,4-xylosyltransferase IRX9 from Arabidopsis thaliana (Mouse-ear cress).